The primary structure comprises 347 residues: SCA7 domain-containing protein SELMODRAFT_439258 (347 aa).

An N-terminal signal peptide occupies residues 1-13 (MCFFLSSLCPVVA). Residues 77-106 (RAEVGGTGPKVGRPRKLSVYNPREMSDGNP) form a disordered region. Residues 134-201 (QHLPFTVDDL…NNSRKSQQAD (68 aa)) enclose the SCA7 domain.

This Selaginella moellendorffii (Spikemoss) protein is SCA7 domain-containing protein SELMODRAFT_439258.